Consider the following 299-residue polypeptide: Exosome complex component rrp42 (299 aa).

The protein belongs to the RNase PH family. In terms of assembly, component of the RNA exosome complex. Specifically part of the catalytically inactive RNA exosome core complex (Exo-9) which may associate with the catalytic subunits rrp6 and dis3 in cytoplasmic- and nuclear-specific RNA exosome complex forms. Exo-9 is formed by a hexameric base ring of RNase PH domain-containing subunits and a cap ring consisting of csl4, rrp4 and rrp40.

The protein resides in the cytoplasm. It is found in the nucleus. Its subcellular location is the nucleolus. Non-catalytic component of the RNA exosome complex which has 3'-&gt;5' exoribonuclease activity and participates in a multitude of cellular RNA processing and degradation events. In the nucleus, the RNA exosome complex is involved in proper maturation of stable RNA species such as rRNA, snRNA and snoRNA, in the elimination of RNA processing by-products and non-coding 'pervasive' transcripts, such as antisense RNA species and cryptic unstable transcripts (CUTs), and of mRNAs with processing defects, thereby limiting or excluding their export to the cytoplasm. In the cytoplasm, the RNA exosome complex is involved in general mRNA turnover and in RNA surveillance pathways, preventing translation of aberrant mRNAs. The catalytic inactive RNA exosome core complex of 9 subunits (Exo-9) is proposed to play a pivotal role in the binding and presentation of RNA for ribonucleolysis, and to serve as a scaffold for the association with catalytic subunits and accessory proteins or complexes. ski6 is part of the hexameric ring of RNase PH domain-containing subunits proposed to form a central channel which threads RNA substrates for degradation. The polypeptide is Exosome complex component rrp42 (rrp42) (Schizosaccharomyces pombe (strain 972 / ATCC 24843) (Fission yeast)).